Consider the following 184-residue polypeptide: GTP cyclohydrolase 1 (184 aa).

The Zn(2+) site is built by C75, H78, and C146.

This sequence belongs to the GTP cyclohydrolase I family. As to quaternary structure, homomer.

It catalyses the reaction GTP + H2O = 7,8-dihydroneopterin 3'-triphosphate + formate + H(+). It participates in cofactor biosynthesis; 7,8-dihydroneopterin triphosphate biosynthesis; 7,8-dihydroneopterin triphosphate from GTP: step 1/1. The polypeptide is GTP cyclohydrolase 1 (Streptococcus pneumoniae serotype 19F (strain G54)).